A 631-amino-acid chain; its full sequence is 1-deoxy-D-xylulose-5-phosphate synthase (631 aa).

Thiamine diphosphate is bound by residues His-78 and 119-121 (AHS). Asp-150 provides a ligand contact to Mg(2+). Residues 151–152 (GA), Asn-179, Tyr-286, and Glu-368 contribute to the thiamine diphosphate site. Asn-179 lines the Mg(2+) pocket.

The protein belongs to the transketolase family. DXPS subfamily. Homodimer. Requires Mg(2+) as cofactor. The cofactor is thiamine diphosphate.

It catalyses the reaction D-glyceraldehyde 3-phosphate + pyruvate + H(+) = 1-deoxy-D-xylulose 5-phosphate + CO2. Its pathway is metabolic intermediate biosynthesis; 1-deoxy-D-xylulose 5-phosphate biosynthesis; 1-deoxy-D-xylulose 5-phosphate from D-glyceraldehyde 3-phosphate and pyruvate: step 1/1. Catalyzes the acyloin condensation reaction between C atoms 2 and 3 of pyruvate and glyceraldehyde 3-phosphate to yield 1-deoxy-D-xylulose-5-phosphate (DXP). This chain is 1-deoxy-D-xylulose-5-phosphate synthase, found in Verminephrobacter eiseniae (strain EF01-2).